A 73-amino-acid chain; its full sequence is Translation initiation factor IF-1 (73 aa).

The region spanning 1 to 73 (MSKKKDVIEM…TRGRITYRYK (73 aa)) is the S1-like domain.

This sequence belongs to the IF-1 family. In terms of assembly, component of the 30S ribosomal translation pre-initiation complex which assembles on the 30S ribosome in the order IF-2 and IF-3, IF-1 and N-formylmethionyl-tRNA(fMet); mRNA recruitment can occur at any time during PIC assembly.

The protein localises to the cytoplasm. One of the essential components for the initiation of protein synthesis. Stabilizes the binding of IF-2 and IF-3 on the 30S subunit to which N-formylmethionyl-tRNA(fMet) subsequently binds. Helps modulate mRNA selection, yielding the 30S pre-initiation complex (PIC). Upon addition of the 50S ribosomal subunit IF-1, IF-2 and IF-3 are released leaving the mature 70S translation initiation complex. This Chloroflexus aurantiacus (strain ATCC 29366 / DSM 635 / J-10-fl) protein is Translation initiation factor IF-1.